The sequence spans 199 residues: dITP/XTP pyrophosphatase (199 aa).

7 to 12 (TGNAGK) contacts substrate. Asp-68 serves as the catalytic Proton acceptor. Residue Asp-68 participates in Mg(2+) binding. Residues Ser-69, 153–156 (FGYD), Lys-176, and 181–182 (HR) each bind substrate.

This sequence belongs to the HAM1 NTPase family. As to quaternary structure, homodimer. The cofactor is Mg(2+).

It catalyses the reaction XTP + H2O = XMP + diphosphate + H(+). The enzyme catalyses dITP + H2O = dIMP + diphosphate + H(+). The catalysed reaction is ITP + H2O = IMP + diphosphate + H(+). Its function is as follows. Pyrophosphatase that catalyzes the hydrolysis of nucleoside triphosphates to their monophosphate derivatives, with a high preference for the non-canonical purine nucleotides XTP (xanthosine triphosphate), dITP (deoxyinosine triphosphate) and ITP. Seems to function as a house-cleaning enzyme that removes non-canonical purine nucleotides from the nucleotide pool, thus preventing their incorporation into DNA/RNA and avoiding chromosomal lesions. This chain is dITP/XTP pyrophosphatase, found in Halorhodospira halophila (strain DSM 244 / SL1) (Ectothiorhodospira halophila (strain DSM 244 / SL1)).